We begin with the raw amino-acid sequence, 460 residues long: Amino acid transporter AVT6A (460 aa).

Helical transmembrane passes span Phe45–Pro65, Ala66–Leu86, Ile120–Ile140, Ala172–Ile192, Ser199–Met219, Leu238–His258, Ala281–Gly301, Leu336–Phe356, Cys371–Trp391, Phe394–Ile414, and Thr427–Ser447.

This sequence belongs to the amino acid/polyamine transporter 2 family. Amino acid/auxin permease (AAAP) (TC 2.A.18.6) subfamily.

It localises to the membrane. The sequence is that of Amino acid transporter AVT6A from Arabidopsis thaliana (Mouse-ear cress).